A 124-amino-acid chain; its full sequence is Ribonuclease pancreatic (124 aa).

Substrate is bound by residues Lys-7 and Arg-10. His-12 functions as the Proton acceptor in the catalytic mechanism. 4 disulfides stabilise this stretch: Cys-26/Cys-84, Cys-40/Cys-95, Cys-58/Cys-110, and Cys-65/Cys-72. A glycan (N-linked (GlcNAc...) asparagine) is linked at Asn-34. Substrate is bound by residues 41–45, Lys-66, and Arg-85; that span reads KPVNT. His-119 acts as the Proton donor in catalysis.

Belongs to the pancreatic ribonuclease family. Monomer. Interacts with and forms tight 1:1 complexes with RNH1. Dimerization of two such complexes may occur. Interaction with RNH1 inhibits this protein. As to expression, pancreas.

The protein localises to the secreted. It catalyses the reaction an [RNA] containing cytidine + H2O = an [RNA]-3'-cytidine-3'-phosphate + a 5'-hydroxy-ribonucleotide-3'-[RNA].. The catalysed reaction is an [RNA] containing uridine + H2O = an [RNA]-3'-uridine-3'-phosphate + a 5'-hydroxy-ribonucleotide-3'-[RNA].. Endonuclease that catalyzes the cleavage of RNA on the 3' side of pyrimidine nucleotides. Acts on single-stranded and double-stranded RNA. The protein is Ribonuclease pancreatic (RNASE1) of Eudorcas thomsonii (Thomson's gazelle).